The chain runs to 621 residues: MALLQISEPGESPAPHQRRLAVGIDLGTTNSLVAAVRSSVPEVLPDEQGRPLLPSVVRYLPAGGAQIGYKAQVEAVRDPKNTIVSVKRFMGRGLKDVAHIENTPYDFVDAPGMVQLKTVAGVKSPVEVSAEILATLRQRAEDTLGDDLVGAVITVPAYFDDAQRQATKDAARLAGLNVLRLLNEPTAAAIAYGLDNAAEGVYAVYDLGGGTFDISVLKLTKGVFEVMSTGGDSALGGDDFDQRIACWIVEQAGLQPLSAEDMRLLLNKARAAKEWLSGADSTEVDAVLSTGETVHLVLTAETFAELTANLVQKTLAPVRRALRDAGVAVDEIQGVVLVGGATRMPVIRRAVAQLFGRAPLTNLDPDQVVAIGAAMQASLLAGNRAAGDDWLLLDVIPLSLGVETMGGLVEKIIPRNSTIPVARAQEFTTFKDGQTAMAIHVLQGERELAGDCRSLARFELRGIPPMVAGAARIRVTYQVDADGLLSVSARETVSGVEASIAVKPSYGLGDDDIARMLQEGFQSAEEDMRRRALAEERVEGERLLEALSHALDADGDLLSADERAAVDAQVAALRVTLQGEDHRAIKDAVDALSHGTDEFAARRMDRGIRAALAGKRIEELG.

It belongs to the heat shock protein 70 family.

Chaperone involved in the maturation of iron-sulfur cluster-containing proteins. Has a low intrinsic ATPase activity which is markedly stimulated by HscB. The chain is Chaperone protein HscA homolog from Ralstonia nicotianae (strain ATCC BAA-1114 / GMI1000) (Ralstonia solanacearum).